The chain runs to 79 residues: MSEIGERVKKIVVEHLGVEPEKVVETASFIDDLGADSLDTVELVMAFEEEFGCEIPDDAAETILTVGDATKFLEKNAKS.

Positions 2 to 77 (SEIGERVKKI…DATKFLEKNA (76 aa)) constitute a Carrier domain. An O-(pantetheine 4'-phosphoryl)serine modification is found at S37.

Belongs to the acyl carrier protein (ACP) family. 4'-phosphopantetheine is transferred from CoA to a specific serine of apo-ACP by AcpS. This modification is essential for activity because fatty acids are bound in thioester linkage to the sulfhydryl of the prosthetic group.

It localises to the cytoplasm. It functions in the pathway lipid metabolism; fatty acid biosynthesis. Functionally, carrier of the growing fatty acid chain in fatty acid biosynthesis. The sequence is that of Acyl carrier protein from Afipia carboxidovorans (strain ATCC 49405 / DSM 1227 / KCTC 32145 / OM5) (Oligotropha carboxidovorans).